A 1770-amino-acid chain; its full sequence is Vitellogenin (1770 aa).

Positions 1-16 (MLLLLTLLLFAGTVAA) are cleaved as a signal peptide. In terms of domain architecture, Vitellogenin spans 22 to 809 (WQVGNEYTYL…SEDSVIPRIL (788 aa)). The cysteines at positions 178 and 222 are disulfide-linked. N-linked (GlcNAc...) asparagine glycosylation is present at asparagine 296. Residues 373 to 394 (SSSSSISSSEENDFWQPKPTLE) form a disordered region. Residue asparagine 1067 is glycosylated (N-linked (GlcNAc...) asparagine). The VWFD domain occupies 1442–1635 (TSCMLDKTRA…SYALISNQCE (194 aa)). Cystine bridges form between cysteine 1444–cysteine 1598 and cysteine 1466–cysteine 1634.

As to expression, accumulates in the hemolymph. Represents up to 70% of the queen's hemolymph proteins. During the first week of the worker adult life, when it becomes a nurse bee and performs brood-rearing tasks, the vitellogenin titer increases and may account for up to 40% of the total hemolymph proteins.

It localises to the secreted. Functionally, precursor of the egg-yolk proteins that are sources of nutrients during embryonic development. Involved in the differentiation of honeybee larvae into queens. This chain is Vitellogenin (Vg), found in Apis mellifera (Honeybee).